Here is a 100-residue protein sequence, read N- to C-terminus: Mitochondrial zinc maintenance protein 1, mitochondrial (100 aa).

Belongs to the complex I LYR family. MZM1 subfamily. Interacts with RIP1.

The protein localises to the mitochondrion matrix. Assembly factor required for Rieske Fe-S protein RIP1 incorporation into the cytochrome b-c1 (CIII) complex. Functions as a chaperone, binding to this subunit within the mitochondrial matrix and stabilizing it prior to its translocation and insertion into the late CIII dimeric intermediate within the mitochondrial inner membrane. Modulates the mitochondrial matrix zinc pool. In Schizosaccharomyces pombe (strain 972 / ATCC 24843) (Fission yeast), this protein is Mitochondrial zinc maintenance protein 1, mitochondrial (new18).